Here is a 317-residue protein sequence, read N- to C-terminus: Annexin D2 (317 aa).

An N-acetylalanine modification is found at alanine 2. Annexin repeat units lie at residues 11–82 (PLPE…LWTL), 83–154 (DPPE…PLVS), 166–238 (MLAR…AVIT), and 242–313 (YPEK…ALLG). 4 residues coordinate Ca(2+): phenylalanine 24, glycine 26, glycine 28, and glutamate 68. Phosphoserine is present on serine 95. Residues threonine 100 and threonine 112 each carry the phosphothreonine modification. Residue tyrosine 129 is modified to Phosphotyrosine. Ca(2+) is bound by residues isoleucine 255 and glycine 259. Tyrosine 284 bears the Phosphotyrosine mark. At serine 289 the chain carries Phosphoserine. Residues aspartate 299, threonine 300, and glutamate 305 each coordinate Ca(2+).

This sequence belongs to the annexin (TC 1.A.31.1) family. In terms of tissue distribution, expressed mainly in roots and flowers. Low in stems and bearly detectable in leaves.

The protein localises to the cytoplasm. Its subcellular location is the cytosol. It is found in the membrane. In terms of biological role, may mediate regulated, targeted secretion of Golgi-derived vesicles during seedling development. The protein is Annexin D2 (ANN2) of Arabidopsis thaliana (Mouse-ear cress).